Here is a 426-residue protein sequence, read N- to C-terminus: Fatty alcohol:caffeoyl-CoA acyltransferase (426 aa).

Residues His-162 and Asp-374 each act as proton acceptor in the active site.

This sequence belongs to the plant acyltransferase family. As to expression, expressed in the outermost circumference of mature roots, the endodermis of young roots and in the seed coat of developing seeds. Expressed in outer integument layer 1 of the seed coat.

Functionally, involved in the synthesis of alkyl hydroxycinnamates in root waxes. Functions as a fatty alcohol:hydroxy cinnamoyl-CoA acyltransferase with apparent preference for caffeoyl-CoA. The protein is Fatty alcohol:caffeoyl-CoA acyltransferase of Arabidopsis thaliana (Mouse-ear cress).